The sequence spans 219 residues: Ribose-5-phosphate isomerase A (219 aa).

Residues 28 to 31 (SGST), 81 to 84 (DGAD), and 94 to 97 (KGGG) contribute to the substrate site. Glutamate 103 acts as the Proton acceptor in catalysis. Residue lysine 121 participates in substrate binding.

This sequence belongs to the ribose 5-phosphate isomerase family. In terms of assembly, homodimer.

The catalysed reaction is aldehydo-D-ribose 5-phosphate = D-ribulose 5-phosphate. Its pathway is carbohydrate degradation; pentose phosphate pathway; D-ribose 5-phosphate from D-ribulose 5-phosphate (non-oxidative stage): step 1/1. Catalyzes the reversible conversion of ribose-5-phosphate to ribulose 5-phosphate. The sequence is that of Ribose-5-phosphate isomerase A from Pasteurella multocida (strain Pm70).